A 487-amino-acid polypeptide reads, in one-letter code: Cyclic AMP-dependent transcription factor ATF-2 (487 aa).

Residues 7-31 (FLCTAPGCGQRFTNEDHLAVHKHKH) form a C2H2-type zinc finger. Disordered stretches follow at residues 106–132 (EEPS…DEKE) and 267–354 (QHPQ…CRQK). The segment covering 298–319 (QQPATSTTETPASPAQPTQQTP) has biased composition (low complexity). The span at 328-345 (AANEDPDEKRRKFLERNR) shows a compositional bias: basic and acidic residues. Residues 334–397 (DEKRRKFLER…AQLKQLLLAH (64 aa)) form the bZIP domain. Residues 336–356 (KRRKFLERNRAAASRCRQKRK) are basic motif. The segment at 362-390 (LEKKAEDLSSLNGQLQNEVTLLRNEVAQL) is leucine-zipper. A Nuclear export signal motif is present at residues 387 to 396 (VAQLKQLLLA). Positions 407–487 (KKSGYHTADK…PPSQAQPSGS (81 aa)) are disordered. Residues 425 to 436 (VPSSPHTEAIQH) show a composition bias toward polar residues. A compositionally biased stretch (low complexity) spans 437 to 449 (SSVSTSNGVSSTS). Residues 457–468 (SVLTQLADQSSE) show a composition bias toward polar residues.

It belongs to the bZIP family. ATF subfamily. In terms of assembly, binds DNA as a dimer and can form a homodimer in the absence of DNA. Can form a heterodimer with JUN. Heterodimerization is essential for its transcriptional activity.

Its subcellular location is the nucleus. It is found in the cytoplasm. The protein resides in the mitochondrion outer membrane. Transcriptional activator which regulates the transcription of various genes, including those involved in anti-apoptosis, cell growth, and DNA damage response. Dependent on its binding partner, binds to CRE (cAMP response element) consensus sequences (5'-TGACGTCA-3') or to AP-1 (activator protein 1) consensus sequences (5'-TGACTCA-3'). The chain is Cyclic AMP-dependent transcription factor ATF-2 (ATF2) from Gallus gallus (Chicken).